We begin with the raw amino-acid sequence, 205 residues long: Holliday junction branch migration complex subunit RuvA (205 aa).

Residues 1-64 (MIGKLKGLID…EDQIKLFGFR (64 aa)) form a domain I region. The tract at residues 65–143 (SDLEREWFRL…AFASVDPAVV (79 aa)) is domain II. The segment at 144–153 (ALSGALDERS) is flexible linker. The domain III stretch occupies residues 153-205 (SAPRPVTDAISALVNLGYGQPQAAAAIASASRSAGEGAETAQLIKLGLKELSK).

This sequence belongs to the RuvA family. In terms of assembly, homotetramer. Forms an RuvA(8)-RuvB(12)-Holliday junction (HJ) complex. HJ DNA is sandwiched between 2 RuvA tetramers; dsDNA enters through RuvA and exits via RuvB. An RuvB hexamer assembles on each DNA strand where it exits the tetramer. Each RuvB hexamer is contacted by two RuvA subunits (via domain III) on 2 adjacent RuvB subunits; this complex drives branch migration. In the full resolvosome a probable DNA-RuvA(4)-RuvB(12)-RuvC(2) complex forms which resolves the HJ.

It localises to the cytoplasm. Functionally, the RuvA-RuvB-RuvC complex processes Holliday junction (HJ) DNA during genetic recombination and DNA repair, while the RuvA-RuvB complex plays an important role in the rescue of blocked DNA replication forks via replication fork reversal (RFR). RuvA specifically binds to HJ cruciform DNA, conferring on it an open structure. The RuvB hexamer acts as an ATP-dependent pump, pulling dsDNA into and through the RuvAB complex. HJ branch migration allows RuvC to scan DNA until it finds its consensus sequence, where it cleaves and resolves the cruciform DNA. The chain is Holliday junction branch migration complex subunit RuvA from Rhodopseudomonas palustris (strain BisB18).